Consider the following 201-residue polypeptide: Pyridoxal 5'-phosphate synthase subunit PdxT (201 aa).

An L-glutamine-binding site is contributed by 48–50 (GES). The active-site Nucleophile is the C80. Residues R109 and 137–138 (IR) contribute to the L-glutamine site. Active-site charge relay system residues include H180 and E182.

The protein belongs to the glutaminase PdxT/SNO family. In the presence of PdxS, forms a dodecamer of heterodimers. Only shows activity in the heterodimer.

The catalysed reaction is aldehydo-D-ribose 5-phosphate + D-glyceraldehyde 3-phosphate + L-glutamine = pyridoxal 5'-phosphate + L-glutamate + phosphate + 3 H2O + H(+). It carries out the reaction L-glutamine + H2O = L-glutamate + NH4(+). It functions in the pathway cofactor biosynthesis; pyridoxal 5'-phosphate biosynthesis. In terms of biological role, catalyzes the hydrolysis of glutamine to glutamate and ammonia as part of the biosynthesis of pyridoxal 5'-phosphate. The resulting ammonia molecule is channeled to the active site of PdxS. The sequence is that of Pyridoxal 5'-phosphate synthase subunit PdxT from Cutibacterium acnes (strain DSM 16379 / KPA171202) (Propionibacterium acnes).